The chain runs to 453 residues: Alpha-glucosidase (453 aa).

Residue 3–69 participates in NAD(+) binding; it reads TKIVLVGAGS…LPFIVSATTD (67 aa). Residue N149 participates in substrate binding. Mn(2+) is bound at residue C171. The Proton donor role is filled by H172. H201 is a binding site for Mn(2+).

In terms of assembly, homotetramer. The cofactor is Mn(2+). It depends on Co(2+) as a cofactor. Ca(2+) serves as cofactor. Fe(2+) is required as a cofactor. Requires Mg(2+) as cofactor. The cofactor is Sr(2+). It depends on Ni(2+) as a cofactor. NAD(+) serves as cofactor.

The catalysed reaction is Hydrolysis of terminal, non-reducing (1-&gt;4)-linked alpha-D-glucose residues with release of alpha-D-glucose.. It participates in glycan degradation; palatinose degradation. With respect to regulation, is inhibited by EDTA in vitro. Functionally, alpha-glucosidase with broad specificity. Hydrolyzes maltose, palatinose, maltulose, trehalose, trehalulose, turanose, leucrose, sucrose and maltitol. Is not active against alpha-galactosides, e.g. melibiose, and alpha-mannosides. Shows an obligate requirement for an O-alpha-glycosidic linkage, since it is not able to cleave beta-glycosidic bonds (cellobiose, gentiobiose, lactose, sophorose or laminaribiose). Cannot hydrolyze phosphorylated alpha-glucosides derivatives. Seems to be involved in the degradation of palatinose, a sucrose isomer that is formed as a reserve material under conditions of excess carbon availability, sequestered in a form unavailable to competitors such as fungi or the host plant, and whose consumption appears to be postponed until the preferentially metabolized carbon source (e.g. sucrose) is depleted. This chain is Alpha-glucosidase (palH), found in Erwinia rhapontici (Pectobacterium rhapontici).